Reading from the N-terminus, the 403-residue chain is Casein kinase I isoform delta-A (403 aa).

In terms of domain architecture, Protein kinase spans 9–277 (YRLGRKIGSG…YLRQLFRNLF (269 aa)). Residues 15–23 (IGSGSFGDI) and Lys38 contribute to the ATP site. The active-site Proton acceptor is the Asp128. The interval 315-340 (QGRIPLPRVMLPTSSGRPRGTQEVAP) is autoinhibitory. A disordered region spans residues 322–403 (RVMLPTSSGR…PSGLQSAVPR (82 aa)).

This sequence belongs to the protein kinase superfamily. As to quaternary structure, monomer. Interacts with per1 and per2. Component of the circadian core oscillator. Post-translationally, autophosphorylated on serine and threonine residues.

The protein resides in the cytoplasm. The protein localises to the nucleus. It catalyses the reaction L-seryl-[protein] + ATP = O-phospho-L-seryl-[protein] + ADP + H(+). The catalysed reaction is L-threonyl-[protein] + ATP = O-phospho-L-threonyl-[protein] + ADP + H(+). Its activity is regulated as follows. Exhibits substrate-dependent heparin activation. Functionally, casein kinases are operationally defined by their preferential utilization of acidic proteins such as caseins as substrates. Central component of the circadian clock. May act as a negative regulator of circadian rhythmicity by phosphorylating per1 and per2, which may lead to their degradation. Participates in wnt signaling. This is Casein kinase I isoform delta-A (csnk1da) from Danio rerio (Zebrafish).